Here is a 381-residue protein sequence, read N- to C-terminus: Carboxylesterase 5A (381 aa).

Ser-108 acts as the Acyl-ester intermediate in catalysis. Residues Cys-162 and Cys-173 are joined by a disulfide bond. A glycan (N-linked (GlcNAc...) asparagine) is linked at Asn-163. The active-site Charge relay system is the Glu-227. Asn-245 carries an N-linked (GlcNAc...) asparagine glycan. The Charge relay system role is filled by His-336.

Belongs to the type-B carboxylesterase/lipase family. In terms of assembly, component of a epididymal complex at least composed of soluble form of prion protein PRNP, CLU, BPI, CES5A, MANBA and GLB1. N-glycosylated. Detected in corpus and cauda epididymal fluid. Present in seminal fluid but not found to be associated with sperm (at protein level). Not expressed in other tissues.

It localises to the secreted. It catalyses the reaction a carboxylic ester + H2O = an alcohol + a carboxylate + H(+). In terms of biological role, involved in the detoxification of xenobiotics and in the activation of ester and amide prodrugs. In Ovis aries (Sheep), this protein is Carboxylesterase 5A (CES5A).